The chain runs to 1128 residues: Phytochrome A (1128 aa).

The span at 1–21 (MSSSRPTQCSSSSSRTRQSSR) shows a compositional bias: low complexity. Residues 1-24 (MSSSRPTQCSSSSSRTRQSSRARI) form a disordered region. The 186-residue stretch at 219-404 (SMEVLCNTVV…VFAVHVNKEF (186 aa)) folds into the GAF domain. Cysteine 324 lines the phytochromobilin pocket. PAS domains lie at 620-690 (VTSE…LQGK) and 750-834 (VEGD…LAGD). Residues 904 to 1124 (YMRHAINNPL…TFILSVELAS (221 aa)) form the Histidine kinase domain.

The protein belongs to the phytochrome family. In terms of assembly, homodimer. Contains one covalently linked phytochromobilin chromophore.

Regulatory photoreceptor which exists in two forms that are reversibly interconvertible by light: the Pr form that absorbs maximally in the red region of the spectrum and the Pfr form that absorbs maximally in the far-red region. Photoconversion of Pr to Pfr induces an array of morphogenic responses, whereas reconversion of Pfr to Pr cancels the induction of those responses. Pfr controls the expression of a number of nuclear genes including those encoding the small subunit of ribulose-bisphosphate carboxylase, chlorophyll A/B binding protein, protochlorophyllide reductase, rRNA, etc. It also controls the expression of its own gene(s) in a negative feedback fashion. The protein is Phytochrome A (PHYA) of Oryza sativa subsp. indica (Rice).